The sequence spans 493 residues: Cardiolipin synthase 1 (493 aa).

The next 2 helical transmembrane spans lie at Phe13 to Phe33 and Trp45 to Phe65. PLD phosphodiesterase domains are found at residues Met228–Tyr255 and Glu406–Ser433. Residues His233, Lys235, Asp240, His411, Lys413, and Asp418 contribute to the active site.

It belongs to the phospholipase D family. Cardiolipin synthase subfamily.

It localises to the cell membrane. The enzyme catalyses 2 a 1,2-diacyl-sn-glycero-3-phospho-(1'-sn-glycerol) = a cardiolipin + glycerol. Its function is as follows. Catalyzes the reversible phosphatidyl group transfer from one phosphatidylglycerol molecule to another to form cardiolipin (CL) (diphosphatidylglycerol) and glycerol. The chain is Cardiolipin synthase 1 (cls1) from Staphylococcus aureus (strain MRSA252).